The chain runs to 228 residues: A-type ATP synthase subunit D (228 aa).

Basic and acidic residues predominate over residues 205-214; that stretch reads KKEEEEKAEA. The tract at residues 205–228 is disordered; it reads KKEEEEKAEAAAEAAAVEDPEPAD.

The protein belongs to the V-ATPase D subunit family. Has multiple subunits with at least A(3), B(3), C, D, E, F, H, I and proteolipid K(x).

It localises to the cell membrane. Component of the A-type ATP synthase that produces ATP from ADP in the presence of a proton gradient across the membrane. The sequence is that of A-type ATP synthase subunit D from Halorubrum lacusprofundi (strain ATCC 49239 / DSM 5036 / JCM 8891 / ACAM 34).